An 86-amino-acid polypeptide reads, in one-letter code: Haditoxin (86 aa).

Residues 1–21 (MKTLLLTLVVVTIVYLDLGYT) form the signal peptide. Cystine bridges form between C24–C45, C38–C62, C66–C78, and C79–C84.

This sequence belongs to the three-finger toxin family. Short-chain subfamily. Orphan group VIII (haditoxin) sub-subfamily. As to quaternary structure, homodimer; non-covalently linked. In terms of tissue distribution, expressed by the venom gland.

It is found in the secreted. Antagonist of muscle (alpha-1-beta-1-delta-epsilon/CHRNA1-CHRNB1-CHRND-CHRNE) and neuronal (alpha-7/CHRNA7, alpha-3-beta-2/CHRNA3-CHRNB2, alpha-4-beta-2/CHRNA4-CHRNB2) nicotinic acetylcholine receptors (nAChR). The highest affinity is for human alpha-7/CHRNA7 nAChRs (IC(50)=180 nM), compared to human alpha-1-beta-1-delta-epsilon/CHRNA1-CHRNB1-CHRND-CHRNE nAChR (IC(50)= 550 nM), alpha-3-beta-2/CHRNA3-CHRNB2 nAChR (IC(50)=500 nM), and alpha-4-beta-2/CHRNA4-CHRNB2 nAChR (IC(50)=2.6 uM). This chain is Haditoxin, found in Ophiophagus hannah (King cobra).